The following is a 326-amino-acid chain: Beta-ketoacyl-[acyl-carrier-protein] synthase III (326 aa).

Active-site residues include C115 and H253. The interval 254 to 258 (QANKR) is ACP-binding. N283 is a catalytic residue.

The protein belongs to the thiolase-like superfamily. FabH family. Homodimer.

It localises to the cytoplasm. The enzyme catalyses malonyl-[ACP] + acetyl-CoA + H(+) = 3-oxobutanoyl-[ACP] + CO2 + CoA. The protein operates within lipid metabolism; fatty acid biosynthesis. Catalyzes the condensation reaction of fatty acid synthesis by the addition to an acyl acceptor of two carbons from malonyl-ACP. Catalyzes the first condensation reaction which initiates fatty acid synthesis and may therefore play a role in governing the total rate of fatty acid production. Possesses both acetoacetyl-ACP synthase and acetyl transacylase activities. Its substrate specificity determines the biosynthesis of branched-chain and/or straight-chain of fatty acids. This is Beta-ketoacyl-[acyl-carrier-protein] synthase III from Bradyrhizobium diazoefficiens (strain JCM 10833 / BCRC 13528 / IAM 13628 / NBRC 14792 / USDA 110).